The chain runs to 40 residues: Photosystem II reaction center protein J (40 aa).

Residues Ile8–Phe28 form a helical membrane-spanning segment.

The protein belongs to the PsbJ family. In terms of assembly, PSII is composed of 1 copy each of membrane proteins PsbA, PsbB, PsbC, PsbD, PsbE, PsbF, PsbH, PsbI, PsbJ, PsbK, PsbL, PsbM, PsbT, PsbX, PsbY, PsbZ, Psb30/Ycf12, at least 3 peripheral proteins of the oxygen-evolving complex and a large number of cofactors. It forms dimeric complexes.

It is found in the plastid. It localises to the chloroplast thylakoid membrane. Its function is as follows. One of the components of the core complex of photosystem II (PSII). PSII is a light-driven water:plastoquinone oxidoreductase that uses light energy to abstract electrons from H(2)O, generating O(2) and a proton gradient subsequently used for ATP formation. It consists of a core antenna complex that captures photons, and an electron transfer chain that converts photonic excitation into a charge separation. This is Photosystem II reaction center protein J from Jasminum nudiflorum (Winter jasmine).